The chain runs to 530 residues: Alkali-sensitive linkage protein 1 (530 aa).

The first 18 residues, 1–18, serve as a signal peptide directing secretion; the sequence is MRTTFATVALAFLSTVGA. Asn55 is a glycosylation site (N-linked (GlcNAc...) asparagine). The interval 69 to 90 is disordered; the sequence is SVTESSDDGASTALPTTSTESV. Residues Asn120 and Asn128 are each glycosylated (N-linked (GlcNAc...) asparagine).

It is found in the endoplasmic reticulum. Its subcellular location is the golgi apparatus. The protein localises to the secreted. It localises to the cell wall. The sequence is that of Alkali-sensitive linkage protein 1 (asl1) from Schizosaccharomyces pombe (strain 972 / ATCC 24843) (Fission yeast).